Reading from the N-terminus, the 543-residue chain is NXPE family member 4 (543 aa).

Positions 1-26 (MKTLASRKSLWMLLFIVIFWVSFTVF) are cleaved as a signal peptide. N-linked (GlcNAc...) asparagine glycans are attached at residues asparagine 91, asparagine 159, and asparagine 223.

Belongs to the NXPE family.

It is found in the secreted. The polypeptide is NXPE family member 4 (Nxpe4) (Mus musculus (Mouse)).